A 193-amino-acid chain; its full sequence is Xanthine phosphoribosyltransferase (193 aa).

2 residues coordinate xanthine: Leu20 and Thr27. 128 to 132 (ANGQA) contributes to the 5-phospho-alpha-D-ribose 1-diphosphate binding site. Lys156 is a xanthine binding site.

It belongs to the purine/pyrimidine phosphoribosyltransferase family. Xpt subfamily. As to quaternary structure, homodimer.

It localises to the cytoplasm. The catalysed reaction is XMP + diphosphate = xanthine + 5-phospho-alpha-D-ribose 1-diphosphate. Its pathway is purine metabolism; XMP biosynthesis via salvage pathway; XMP from xanthine: step 1/1. Functionally, converts the preformed base xanthine, a product of nucleic acid breakdown, to xanthosine 5'-monophosphate (XMP), so it can be reused for RNA or DNA synthesis. This chain is Xanthine phosphoribosyltransferase, found in Streptococcus pyogenes serotype M49 (strain NZ131).